A 240-amino-acid polypeptide reads, in one-letter code: 1-(5-phosphoribosyl)-5-[(5-phosphoribosylamino)methylideneamino] imidazole-4-carboxamide isomerase (240 aa).

Residue aspartate 8 is the Proton acceptor of the active site. Residue aspartate 129 is the Proton donor of the active site.

Belongs to the HisA/HisF family.

The protein localises to the cytoplasm. It catalyses the reaction 1-(5-phospho-beta-D-ribosyl)-5-[(5-phospho-beta-D-ribosylamino)methylideneamino]imidazole-4-carboxamide = 5-[(5-phospho-1-deoxy-D-ribulos-1-ylimino)methylamino]-1-(5-phospho-beta-D-ribosyl)imidazole-4-carboxamide. It participates in amino-acid biosynthesis; L-histidine biosynthesis; L-histidine from 5-phospho-alpha-D-ribose 1-diphosphate: step 4/9. The chain is 1-(5-phosphoribosyl)-5-[(5-phosphoribosylamino)methylideneamino] imidazole-4-carboxamide isomerase from Caldanaerobacter subterraneus subsp. tengcongensis (strain DSM 15242 / JCM 11007 / NBRC 100824 / MB4) (Thermoanaerobacter tengcongensis).